The chain runs to 165 residues: Protein SprT (165 aa).

A SprT-like domain is found at 22 to 163; the sequence is LAQANLKLGR…RCVHCGEQLT (142 aa). His78 contributes to the Zn(2+) binding site. Residue Glu79 is part of the active site. His82 serves as a coordination point for Zn(2+).

It belongs to the SprT family. It depends on Zn(2+) as a cofactor.

The protein resides in the cytoplasm. This chain is Protein SprT, found in Escherichia fergusonii (strain ATCC 35469 / DSM 13698 / CCUG 18766 / IAM 14443 / JCM 21226 / LMG 7866 / NBRC 102419 / NCTC 12128 / CDC 0568-73).